A 524-amino-acid polypeptide reads, in one-letter code: Acetyl-CoA decarbonylase/synthase complex subunit beta (524 aa).

[Ni-Fe-S] cluster is bound by residues Cys212, Cys215, Cys301, and Cys303. A disordered region spans residues 436-466; sequence WVEEEEEEAEEVAEEAAAEAAPAAQPAQAAQ. The span at 437–452 shows a compositional bias: acidic residues; the sequence is VEEEEEEAEEVAEEAA. Residues 453-466 show a composition bias toward low complexity; sequence AEAAPAAQPAQAAQ.

The protein belongs to the CdhC family. Monomer. The ACDS complex is made up of alpha, epsilon, beta, gamma and delta chains with a probable stoichiometry of (alpha(2)epsilon(2))(4)-beta(8)-(gamma(1)delta(1))(8). The cofactor is [Ni-Fe-S] cluster.

The enzyme catalyses Co(I)-[corrinoid Fe-S protein] + acetyl-CoA + H(+) = methyl-Co(III)-[corrinoid Fe-S protein] + CO + CoA. Functionally, part of a complex that catalyzes the reversible cleavage of acetyl-CoA, allowing autotrophic growth from CO(2). The alpha-epsilon complex generates CO from CO(2), while the beta subunit (this protein) combines the CO with CoA and a methyl group to form acetyl-CoA. The methyl group, which is incorporated into acetyl-CoA, is transferred to the beta subunit by a corrinoid iron-sulfur protein (the gamma-delta complex). This Archaeoglobus fulgidus (strain ATCC 49558 / DSM 4304 / JCM 9628 / NBRC 100126 / VC-16) protein is Acetyl-CoA decarbonylase/synthase complex subunit beta.